We begin with the raw amino-acid sequence, 472 residues long: Phosphoenolpyruvate carboxykinase (ATP), glycosomal (472 aa).

221–228 (GLSGTGKT) lines the ATP pocket.

This sequence belongs to the phosphoenolpyruvate carboxykinase (ATP) family. Homodimer.

It localises to the glycosome. It catalyses the reaction oxaloacetate + ATP = phosphoenolpyruvate + ADP + CO2. It participates in carbohydrate biosynthesis; gluconeogenesis. This is Phosphoenolpyruvate carboxykinase (ATP), glycosomal (PEPCK) from Trypanosoma cruzi.